The following is a 115-amino-acid chain: Pancreatic progenitor cell differentiation and proliferation factor B (115 aa).

Positions 21–48 (IGSTSSSSSCGSSEYSGEVIPHHPGLPK) are disordered. The span at 22–37 (GSTSSSSSCGSSEYSG) shows a compositional bias: low complexity.

The protein belongs to the PPDPF family.

Probable regulator of exocrine pancreas development. The polypeptide is Pancreatic progenitor cell differentiation and proliferation factor B (ppdpfb) (Danio rerio (Zebrafish)).